The following is an 881-amino-acid chain: Squamosa promoter-binding-like protein 1 (881 aa).

Residues 49–69 (FPLGNSSNSSSSCSDEGNDKK) form a disordered region. Residues 53-62 (NSSNSSSSCS) show a composition bias toward low complexity. The interval 96–187 (PAKKTKSGAV…RKTNPEPGAN (92 aa)) is sufficient and necessary for DNA binding. Residues 103–180 (GAVCQVENCE…AGHNKRRRKT (78 aa)) form an SBP-type zinc finger. Zn(2+) is bound by residues cysteine 106, cysteine 111, cysteine 128, histidine 131, cysteine 147, cysteine 150, histidine 154, and cysteine 166. The Bipartite nuclear localization signal signature appears at 163–179 (KRSCRRRLAGHNKRRRK). Over residues 170 to 179 (LAGHNKRRRK) the composition is skewed to basic residues. Disordered regions lie at residues 170–193 (LAGH…PSDD) and 274–358 (FSAR…EDAQ). The segment covering 275-284 (SARQDGTATE) has biased composition (polar residues). The span at 285-295 (NRSEKQVKMND) shows a compositional bias: basic and acidic residues. Polar residues predominate over residues 319–338 (PATSSLDYPSWIHQSSPPQT). A compositionally biased stretch (low complexity) spans 339-356 (SRNSDSASDQSPSSSSED).

It depends on Zn(2+) as a cofactor.

Its subcellular location is the nucleus. In terms of biological role, trans-acting factor that binds specifically to the consensus nucleotide sequence 5'-TNCGTACAA-3' of AP1 promoter. Binds specifically to the 5'-GTAC-3' core sequence. This chain is Squamosa promoter-binding-like protein 1 (SPL1), found in Arabidopsis thaliana (Mouse-ear cress).